Here is a 331-residue protein sequence, read N- to C-terminus: Ketol-acid reductoisomerase (NADP(+)) (331 aa).

The KARI N-terminal Rossmann domain occupies Ala-4 to Thr-183. Residues Tyr-27–Gln-30, Arg-50, Ser-53, Ser-55, and Asp-85–Gln-88 each bind NADP(+). Residue His-109 is part of the active site. Residue Gly-135 participates in NADP(+) binding. The KARI C-terminal knotted domain maps to Thr-184–Gly-329. Residues Asp-192, Glu-196, Glu-228, and Glu-232 each contribute to the Mg(2+) site. Substrate is bound at residue Ser-253.

This sequence belongs to the ketol-acid reductoisomerase family. Requires Mg(2+) as cofactor.

The enzyme catalyses (2R)-2,3-dihydroxy-3-methylbutanoate + NADP(+) = (2S)-2-acetolactate + NADPH + H(+). The catalysed reaction is (2R,3R)-2,3-dihydroxy-3-methylpentanoate + NADP(+) = (S)-2-ethyl-2-hydroxy-3-oxobutanoate + NADPH + H(+). The protein operates within amino-acid biosynthesis; L-isoleucine biosynthesis; L-isoleucine from 2-oxobutanoate: step 2/4. It functions in the pathway amino-acid biosynthesis; L-valine biosynthesis; L-valine from pyruvate: step 2/4. In terms of biological role, involved in the biosynthesis of branched-chain amino acids (BCAA). Catalyzes an alkyl-migration followed by a ketol-acid reduction of (S)-2-acetolactate (S2AL) to yield (R)-2,3-dihydroxy-isovalerate. In the isomerase reaction, S2AL is rearranged via a Mg-dependent methyl migration to produce 3-hydroxy-3-methyl-2-ketobutyrate (HMKB). In the reductase reaction, this 2-ketoacid undergoes a metal-dependent reduction by NADPH to yield (R)-2,3-dihydroxy-isovalerate. In Natronomonas pharaonis (strain ATCC 35678 / DSM 2160 / CIP 103997 / JCM 8858 / NBRC 14720 / NCIMB 2260 / Gabara) (Halobacterium pharaonis), this protein is Ketol-acid reductoisomerase (NADP(+)).